The following is a 946-amino-acid chain: MKPDRDSLDEFFEYEAEDFLVYLALLITEGRTPEHSVKGRTEGPHCPPAQLSQPAPNKHECSDKLAQCREARKTRSEVAFLWRNNIPIMVEVMLLPDCCYSDEGANTDGNDLNDPALKQDALLLERWTLEPVPRQSGDRFIEEKTLLLAVRSFVFFSQLSAWLSVSHGAVPRNILYRVSAADEELKLNFSHSPTEHVFPVPNVSHNVALKVSVQSLPRQSSYPVLNCSIHSNLGFYEKKILPREHSVTQPHNSQDNDQNSAPVSQHAFTKPSWSVGPEGLLHARTNVSTDLSLPVRNSKLLSTVDKGYSIGTPPSKHQCFSMTGNYKAAPQEPVRNFKSFSLVGVPCSPQASQTVETNPLIGSLIQERQEVIARIAQHLLQCDQTSSQINSHSIINELSSINGKIKNSSEDEKFQKKNKESPPICTSTLALTLSTGNQISNLKKAPDTPINSSRPILEFHTSPNPQARRKLILFESNEHFCNPFQSSGQSTVPSSNNENINKLPEKRDIKQSEHGEISTRTGNQLSNSCNTNDRLCTNTQIVPEDKSCTDSFHKPQKDNPKICSQKVGHRNGQAQETTCRETRKSDHSNQLLSIENCINKDRDNIQYKEPQDKLKSVHDENEDPTNCDCLAQGQRKCNGNCLQRSESLKNTEQKPIQLRHSCTWKKQTFRSLDGISTKAFHPRTGLPLLSSPVPQRKTQSGYFDLDNSLLKLKGLSTQRQHVNGFTDEDTVATNKQLSSSAPPAPCLSLLGNFEESVLNYRFEPLGVVEGFTAEVGASGIFCPTHMTLPVKVSFYSVSDDNAPSPYMGNITLESLGKRGYRIPPSGTIQVTLFNPNKTVVKMFVVKYDLRDMPANHQTFLRQRTFSVPVRRETKGAVTENGLKAEDRTLRYLIHLRFQSSKSGKIYLHRDVRLLFSRKSMEVDSGAAYELKSYIETPTNPQYSPRC.

Residues 24–32 (ALLITEGRT) are transactivation domain 1 (TAD1). The span at 34 to 43 (EHSVKGRTEG) shows a compositional bias: basic and acidic residues. Disordered stretches follow at residues 34–58 (EHSV…APNK), 246–271 (SVTQ…FTKP), 484–524 (FQSS…TGNQ), and 547–567 (SCTD…SQKV). 2 stretches are compositionally biased toward polar residues: residues 247 to 267 (VTQP…SQHA) and 484 to 500 (FQSS…NENI). Basic and acidic residues-rich tracts occupy residues 503 to 517 (LPEK…HGEI) and 547 to 560 (SCTD…KDNP). The segment at 749-806 (LLGNFEESVLNYRFEPLGVVEGFTAEVGASGIFCPTHMTLPVKVSFYSVSDDNAPSPY) is required for macropage invasion. The segment at 833–841 (FNPNKTVVK) is transactivation domain 2 (TAD2).

The protein belongs to the ATOS family.

The protein resides in the nucleus. Functionally, transcription regulator that syncronizes transcriptional and translational programs to promote macrophage invasion of tissues. The chain is Atos homolog protein A (atosa) from Xenopus tropicalis (Western clawed frog).